We begin with the raw amino-acid sequence, 330 residues long: MSAVTESVLESIISPVTMSEFLEEYWPVKPLVARGEVERFTSIPGFEKVRTLENVLAIYNNPVMVVGDAVIEESEGITDRFLVSPAEALEWYEKGAALEFDFTDLFIPQVRRWIEKLKAELRLPAGTSSKAIVYAAKNGGGFKAHFDAYTNLIFQIQGEKTWKLAKNENVSNPMQHYDLSEAPYYPDDLQSYWKGDPPKEDLPDAEIVNLTPGTMLYLPRGLWHSTKSDQATLALNITFGQPAWLDLMLAALRKKLISDNRFRELAVNHQSLHESSKSELNGYLESLIQTLSENAETLTPEQIFQSQDSDFDPYQSTQLVFRQLLTSYKF.

Residues 96 to 256 (AALEFDFTDL…LMLAALRKKL (161 aa)) form the JmjC domain. Residues His-145, Asp-147, and His-224 each coordinate Fe cation.

It belongs to the ROX family. Fe(2+) serves as cofactor.

This is an uncharacterized protein from Bacillus subtilis (strain 168).